The following is a 513-amino-acid chain: Activin receptor type-2A (513 aa).

Residues 1 to 19 form the signal peptide; it reads MGAAAKLAFAVFLISCSSG. The Extracellular segment spans residues 20-135; the sequence is AILGRSETQE…TSNPVTPKPP (116 aa). Disulfide bonds link Cys-30/Cys-60, Cys-50/Cys-78, Cys-85/Cys-104, Cys-91/Cys-103, and Cys-105/Cys-110. N-linked (GlcNAc...) asparagine glycosylation is found at Asn-43 and Asn-66. Residues 136 to 161 traverse the membrane as a helical segment; it reads YYNILLYSLVPLMLIAGIVICAFWVY. At 162–513 the chain is on the cytoplasmic side; the sequence is RHHKMAYPPV…VDFPPKESSL (352 aa). In terms of domain architecture, Protein kinase spans 192 to 485; sequence LQLLEVKARG…GERITQMQRL (294 aa). Residues 198-206 and Lys-219 contribute to the ATP site; that span reads KARGRFGCV. Asp-322 serves as the catalytic Proton acceptor.

The protein belongs to the protein kinase superfamily. TKL Ser/Thr protein kinase family. TGFB receptor subfamily. In terms of assembly, part of a complex consisting of MAGI2/ARIP1, ACVR2A, ACVR1B and SMAD3. Interacts with MAGI2/ARIP1. Interacts with type I receptor ACVR1. Interacts with BMP7. Interacts with TSC22D1/TSC-22. Interacts with activin A/INHBA. Requires Mg(2+) as cofactor. Mn(2+) serves as cofactor.

The protein localises to the cell membrane. It carries out the reaction L-threonyl-[receptor-protein] + ATP = O-phospho-L-threonyl-[receptor-protein] + ADP + H(+). The catalysed reaction is L-seryl-[receptor-protein] + ATP = O-phospho-L-seryl-[receptor-protein] + ADP + H(+). On ligand binding, forms a receptor complex consisting of two type II and two type I transmembrane serine/threonine kinases. Type II receptors phosphorylate and activate type I receptors which autophosphorylate, then bind and activate SMAD transcriptional regulators. Receptor for activin A, activin B and inhibin A. Mediates induction of adipogenesis by GDF6. The polypeptide is Activin receptor type-2A (ACVR2A) (Bos taurus (Bovine)).